The sequence spans 160 residues: Respiratory supercomplex factor 1, mitochondrial (160 aa).

An HIG1 domain is found at 5–96 (PSSFDGAEQD…TSQKERQSKE (92 aa)). A run of 2 helical transmembrane segments spans residues 33–50 (LVPLGTLATTVAVILAAQ) and 63–85 (YFRWRVGLQGATLVALVAGSFIY). Residues 86-160 (GTSQKERQSK…DLQAKTSSSK (75 aa)) adopt a coiled-coil conformation. The segment at 135–160 (AKELEQETQGLQQELRDLQAKTSSSK) is disordered.

It belongs to the RCF1 family. In terms of assembly, associates with the respiratory chain complex III/complex IV supercomplex.

It is found in the mitochondrion membrane. Functionally, cytochrome c oxidase subunit which plays a role in assembly of respiratory supercomplexes. The chain is Respiratory supercomplex factor 1, mitochondrial (RCF1) from Lachancea thermotolerans (strain ATCC 56472 / CBS 6340 / NRRL Y-8284) (Yeast).